The following is a 412-amino-acid chain: Multifunctional CCA protein (412 aa).

The ATP site is built by G8 and R11. Positions 8 and 11 each coordinate CTP. D21 and D23 together coordinate Mg(2+). ATP-binding residues include R91, R137, and R140. CTP-binding residues include R91, R137, and R140. The HD domain occupies 228-329 (TGIHTLMTLS…VKLFDSIDAW (102 aa)).

It belongs to the tRNA nucleotidyltransferase/poly(A) polymerase family. Bacterial CCA-adding enzyme type 1 subfamily. As to quaternary structure, monomer. Can also form homodimers and oligomers. Mg(2+) serves as cofactor. The cofactor is Ni(2+).

The enzyme catalyses a tRNA precursor + 2 CTP + ATP = a tRNA with a 3' CCA end + 3 diphosphate. The catalysed reaction is a tRNA with a 3' CCA end + 2 CTP + ATP = a tRNA with a 3' CCACCA end + 3 diphosphate. Catalyzes the addition and repair of the essential 3'-terminal CCA sequence in tRNAs without using a nucleic acid template. Adds these three nucleotides in the order of C, C, and A to the tRNA nucleotide-73, using CTP and ATP as substrates and producing inorganic pyrophosphate. tRNA 3'-terminal CCA addition is required both for tRNA processing and repair. Also involved in tRNA surveillance by mediating tandem CCA addition to generate a CCACCA at the 3' terminus of unstable tRNAs. While stable tRNAs receive only 3'-terminal CCA, unstable tRNAs are marked with CCACCA and rapidly degraded. This Escherichia coli (strain SE11) protein is Multifunctional CCA protein.